Reading from the N-terminus, the 795-residue chain is Outer membrane protein assembly factor BamA (795 aa).

Residues 1-19 (MKKLLIASLLFGTTTTVFA) form the signal peptide. POTRA domains are found at residues 22-89 (FVAK…VVAK), 90-170 (SIIS…INED), 173-259 (AKLA…VNEG), 262-341 (YDLR…VDAG), and 344-418 (LTVR…VKER).

This sequence belongs to the BamA family. Part of the Bam complex.

The protein localises to the cell outer membrane. Part of the outer membrane protein assembly complex, which is involved in assembly and insertion of beta-barrel proteins into the outer membrane. The protein is Outer membrane protein assembly factor BamA of Haemophilus influenzae (strain ATCC 51907 / DSM 11121 / KW20 / Rd).